Here is a 546-residue protein sequence, read N- to C-terminus: Amidophosphoribosyltransferase (546 aa).

The span at 1-26 (MSAPQQQQQSQQKQQQHVRVVEQQQV) shows a compositional bias: low complexity. A disordered region spans residues 1 to 39 (MSAPQQQQQSQQKQQQHVRVVEQQQVEPAEAVTSSMESE). The propeptide occupies 1-53 (MSAPQQQQQSQQKQQQHVRVVEQQQVEPAEAVTSSMESESISASKELTGLTHE). Cysteine 54 functions as the Nucleophile in the catalytic mechanism. Positions 54 to 302 (CGVFGAIACG…PGEIVELSRS (249 aa)) constitute a Glutamine amidotransferase type-2 domain. Serine 113 is subject to Phosphoserine. Threonine 114 bears the Phosphothreonine mark. Serine 120 bears the Phosphoserine mark. A [4Fe-4S] cluster-binding site is contributed by cysteine 321. Positions 368, 430, and 431 each coordinate Mg(2+). [4Fe-4S] cluster is bound by residues cysteine 467, cysteine 528, and cysteine 531.

This sequence in the C-terminal section; belongs to the purine/pyrimidine phosphoribosyltransferase family. It depends on Mg(2+) as a cofactor. [4Fe-4S] cluster serves as cofactor.

It catalyses the reaction 5-phospho-beta-D-ribosylamine + L-glutamate + diphosphate = 5-phospho-alpha-D-ribose 1-diphosphate + L-glutamine + H2O. It functions in the pathway purine metabolism; IMP biosynthesis via de novo pathway; N(1)-(5-phospho-D-ribosyl)glycinamide from 5-phospho-alpha-D-ribose 1-diphosphate: step 1/2. In terms of biological role, involved in the first step (and regulatory point) of the de novo biosynthesis of purine nucleotides, where it catalyzes the transfer of glutamine amide to 5-phospho-alpha-D-ribose 1-diphosphate. In Drosophila melanogaster (Fruit fly), this protein is Amidophosphoribosyltransferase (Prat).